We begin with the raw amino-acid sequence, 215 residues long: MTKYSSLSGIFSRKWIFIRGIPTIHFLPPEGPPEIAFAGRSNVGKSSLINALVQQKSLARTSNTPGRTQELNYFVPDGFSGEPGNLPPIALVDMPGYGFAEAPKNLVDAWTHLIFSYLRGRTTLKRVYVLIDSRHGIKKNDGDVLDLLDKAAVSYQIVLTKSDKTKSNELAKLIMITKTKLLKHPAAYPELLVTSSEKALGLEELRAAILQAIAV.

Residues 31-215 (GPPEIAFAGR…RAAILQAIAV (185 aa)) enclose the EngB-type G domain. GTP contacts are provided by residues 39–46 (GRSNVGKS), 66–70 (GRTQE), 93–96 (DMPG), 160–163 (TKSD), and 194–196 (TSS). The Mg(2+) site is built by S46 and T68.

It belongs to the TRAFAC class TrmE-Era-EngA-EngB-Septin-like GTPase superfamily. EngB GTPase family. It depends on Mg(2+) as a cofactor.

Its function is as follows. Necessary for normal cell division and for the maintenance of normal septation. This is Probable GTP-binding protein EngB from Bartonella quintana (strain Toulouse) (Rochalimaea quintana).